Reading from the N-terminus, the 444-residue chain is Argininosuccinate synthase (444 aa).

ATP is bound by residues 17–25 (AFSGGLDTS) and A43. Y99 serves as a coordination point for L-citrulline. ATP contacts are provided by G129 and T131. Positions 131, 135, and 136 each coordinate L-aspartate. N135 is an L-citrulline binding site. D136 contacts ATP. L-citrulline contacts are provided by R139 and S192. D194 lines the ATP pocket. L-citrulline contacts are provided by T201, E203, and E280.

This sequence belongs to the argininosuccinate synthase family. Type 2 subfamily. Homotetramer.

It is found in the cytoplasm. It carries out the reaction L-citrulline + L-aspartate + ATP = 2-(N(omega)-L-arginino)succinate + AMP + diphosphate + H(+). Its pathway is amino-acid biosynthesis; L-arginine biosynthesis; L-arginine from L-ornithine and carbamoyl phosphate: step 2/3. In Burkholderia lata (strain ATCC 17760 / DSM 23089 / LMG 22485 / NCIMB 9086 / R18194 / 383), this protein is Argininosuccinate synthase.